We begin with the raw amino-acid sequence, 355 residues long: Guanine nucleotide-binding protein alpha-2 subunit (355 aa).

The segment at 1-20 is disordered; that stretch reads MCFGGRGKDDEAEASRSREL. The G-alpha domain occupies 33-355; sequence KEVKLLLLGA…IQRNLKQLIL (323 aa). The segment at 36 to 49 is G1 motif; sequence KLLLLGAGESGKST. E44, S45, G46, K47, S48, T49, D151, L176, T182, G204, N270, K271, D273, and A328 together coordinate GTP. Residue S48 participates in Mg(2+) binding. The tract at residues 174 to 182 is G2 motif; the sequence is DLLRSRLRT. T182 is a binding site for Mg(2+). Residues 197-206 are G3 motif; sequence YRMFDVGGQR. The tract at residues 266 to 273 is G4 motif; it reads ILFLNKID. The segment at 326 to 331 is G5 motif; that stretch reads TNATDT.

The protein belongs to the G-alpha family. G(q) subfamily. G proteins are composed of 3 units; alpha, beta and gamma. The alpha chain contains the guanine nucleotide binding site. Mg(2+) serves as cofactor.

In terms of biological role, guanine nucleotide-binding proteins (G proteins) are involved as modulators or transducers in various transmembrane signaling systems. This is Guanine nucleotide-binding protein alpha-2 subunit (gna-2) from Neurospora crassa (strain ATCC 24698 / 74-OR23-1A / CBS 708.71 / DSM 1257 / FGSC 987).